The primary structure comprises 221 residues: Large ribosomal subunit protein uL4 (221 aa).

Positions 47–77 (GTASTKTRGEVSGGGRKPWIQKHTGRARQGS) are disordered.

Belongs to the universal ribosomal protein uL4 family. In terms of assembly, part of the 50S ribosomal subunit.

One of the primary rRNA binding proteins, this protein initially binds near the 5'-end of the 23S rRNA. It is important during the early stages of 50S assembly. It makes multiple contacts with different domains of the 23S rRNA in the assembled 50S subunit and ribosome. Its function is as follows. Forms part of the polypeptide exit tunnel. The polypeptide is Large ribosomal subunit protein uL4 (Thermosipho melanesiensis (strain DSM 12029 / CIP 104789 / BI429)).